Reading from the N-terminus, the 179-residue chain is NADH-quinone oxidoreductase subunit I (179 aa).

4Fe-4S ferredoxin-type domains are found at residues 45–74 and 90–119; these read RHPD…VEAA and KVYE…LGNE. [4Fe-4S] cluster contacts are provided by Cys-54, Cys-57, Cys-60, Cys-64, Cys-99, Cys-102, Cys-105, and Cys-109. The disordered stretch occupies residues 146–179; it reads PQRREAQRTGKPVRLGFKVPKGPRPELEGVEYPR. Residues 168–179 show a composition bias toward basic and acidic residues; the sequence is PRPELEGVEYPR.

Belongs to the complex I 23 kDa subunit family. NDH-1 is composed of 15 different subunits. Subunits NuoA, H, J, K, L, M, N constitute the membrane sector of the complex. [4Fe-4S] cluster serves as cofactor.

The protein resides in the cell membrane. It catalyses the reaction a quinone + NADH + 5 H(+)(in) = a quinol + NAD(+) + 4 H(+)(out). Its function is as follows. NDH-1 shuttles electrons from NADH, via FMN and iron-sulfur (Fe-S) centers, to quinones in the respiratory chain. The immediate electron acceptor for the enzyme in this species is believed to be ubiquinone. Couples the redox reaction to proton translocation (for every two electrons transferred, four hydrogen ions are translocated across the cytoplasmic membrane), and thus conserves the redox energy in a proton gradient. In Deinococcus geothermalis (strain DSM 11300 / CIP 105573 / AG-3a), this protein is NADH-quinone oxidoreductase subunit I.